Here is a 151-residue protein sequence, read N- to C-terminus: Flagellar assembly factor FliW 2 (151 aa).

It belongs to the FliW family. As to quaternary structure, interacts with translational regulator CsrA and flagellin(s).

It is found in the cytoplasm. In terms of biological role, acts as an anti-CsrA protein, binds CsrA and prevents it from repressing translation of its target genes, one of which is flagellin. Binds to flagellin and participates in the assembly of the flagellum. In Desulfotalea psychrophila (strain LSv54 / DSM 12343), this protein is Flagellar assembly factor FliW 2.